Reading from the N-terminus, the 379-residue chain is Lipoyl synthase, mitochondrial (379 aa).

The [4Fe-4S] cluster site is built by C94, C99, C105, C126, C130, C133, and S342. In terms of domain architecture, Radical SAM core spans 109 to 331 (GEDNGAATAT…EKEAMSMGFL (223 aa)).

It belongs to the radical SAM superfamily. Lipoyl synthase family. Requires [4Fe-4S] cluster as cofactor.

It is found in the mitochondrion. The enzyme catalyses [[Fe-S] cluster scaffold protein carrying a second [4Fe-4S](2+) cluster] + N(6)-octanoyl-L-lysyl-[protein] + 2 oxidized [2Fe-2S]-[ferredoxin] + 2 S-adenosyl-L-methionine + 4 H(+) = [[Fe-S] cluster scaffold protein] + N(6)-[(R)-dihydrolipoyl]-L-lysyl-[protein] + 4 Fe(3+) + 2 hydrogen sulfide + 2 5'-deoxyadenosine + 2 L-methionine + 2 reduced [2Fe-2S]-[ferredoxin]. It participates in protein modification; protein lipoylation via endogenous pathway; protein N(6)-(lipoyl)lysine from octanoyl-[acyl-carrier-protein]: step 2/2. In terms of biological role, catalyzes the radical-mediated insertion of two sulfur atoms into the C-6 and C-8 positions of the octanoyl moiety bound to the lipoyl domains of lipoate-dependent enzymes, thereby converting the octanoylated domains into lipoylated derivatives. The protein is Lipoyl synthase, mitochondrial of Leishmania braziliensis.